The primary structure comprises 185 residues: Probable E3 ubiquitin-protein ligase ATL44 (185 aa).

A helical transmembrane segment spans residues Val-29–Val-49. Residues Cys-102 to Arg-144 form an RING-type; atypical zinc finger. A disordered region spans residues Met-163–Pro-185. Over residues Ser-176–Pro-185 the composition is skewed to polar residues.

Belongs to the RING-type zinc finger family. ATL subfamily. As to quaternary structure, interacts with BIK1. Post-translationally, auto-monoubiquitination. In terms of tissue distribution, expressed in stems, flowers and green siliques.

Its subcellular location is the membrane. It catalyses the reaction S-ubiquitinyl-[E2 ubiquitin-conjugating enzyme]-L-cysteine + [acceptor protein]-L-lysine = [E2 ubiquitin-conjugating enzyme]-L-cysteine + N(6)-ubiquitinyl-[acceptor protein]-L-lysine.. The protein operates within protein modification; protein ubiquitination. In terms of biological role, E3 ubiquitin-protein ligase that possess E3 ubiquitin ligase activity in vitro and mediates protein monoubiquitination. Triggers the monoubiquitination of phosphorylated BIK1 in response to pathogen-associated molecular pattern (PAMP) detection. This Arabidopsis thaliana (Mouse-ear cress) protein is Probable E3 ubiquitin-protein ligase ATL44.